Here is a 139-residue protein sequence, read N- to C-terminus: Lymphocyte antigen 6H (139 aa).

A signal peptide spans Met1–Gly25. In terms of domain architecture, UPAR/Ly6 spans Leu26–Ser113. Intrachain disulfides connect Cys28–Cys51, Cys31–Cys39, Cys44–Cys72, Cys76–Cys103, and Cys104–Cys109. A glycan (N-linked (GlcNAc...) asparagine) is linked at Asn35. The GPI-anchor amidated asparagine moiety is linked to residue Asn110. A propeptide spans Gly111–Pro139 (removed in mature form).

Interacts with CHRNA4 and CHRNA7. Strongly expressed in brain, also found in lower levels in eye and reproductive tissues.

The protein resides in the cell membrane. In terms of biological role, believed to act as modulator of nicotinic acetylcholine receptors (nAChRs) activity. In vitro inhibits alpha-3:beta-4-containing nAChRs maximum response. In vitro inhibits alpha-3:beta-4-containing nAChRs maximum response. May play a role in the intracellular trafficking of alpha-7-containing nAChRs and may inhibit their expression at the cell surface. Seems to inhibit alpha-7/CHRNA7 signaling in hippocampal neurons. This Mus musculus (Mouse) protein is Lymphocyte antigen 6H (Ly6h).